A 546-amino-acid chain; its full sequence is Probable protein kinase UbiB (546 aa).

The Protein kinase domain occupies 124 to 502 (DFDIQPLASA…HVRQSQSRYL (379 aa)). Residues 130 to 138 (LASASIAQV) and Lys-153 each bind ATP. Residue Asp-288 is the Proton acceptor of the active site. Transmembrane regions (helical) follow at residues 501–521 (YLLGIGATLLLSGSFLLVNRP) and 522–542 (EWGLMPGWLMVGGVVVWLVGW).

Belongs to the ABC1 family. UbiB subfamily.

It is found in the cell inner membrane. It functions in the pathway cofactor biosynthesis; ubiquinone biosynthesis [regulation]. Its function is as follows. Is probably a protein kinase regulator of UbiI activity which is involved in aerobic coenzyme Q (ubiquinone) biosynthesis. The sequence is that of Probable protein kinase UbiB from Salmonella agona (strain SL483).